The chain runs to 292 residues: 1D-myo-inositol 2-acetamido-2-deoxy-alpha-D-glucopyranoside deacetylase (292 aa).

3 residues coordinate Zn(2+): H12, D15, and H147.

The protein belongs to the MshB deacetylase family. It depends on Zn(2+) as a cofactor.

The catalysed reaction is 1D-myo-inositol 2-acetamido-2-deoxy-alpha-D-glucopyranoside + H2O = 1D-myo-inositol 2-amino-2-deoxy-alpha-D-glucopyranoside + acetate. In terms of biological role, catalyzes the deacetylation of 1D-myo-inositol 2-acetamido-2-deoxy-alpha-D-glucopyranoside (GlcNAc-Ins) in the mycothiol biosynthesis pathway. This Rhodococcus opacus (strain B4) protein is 1D-myo-inositol 2-acetamido-2-deoxy-alpha-D-glucopyranoside deacetylase.